Consider the following 386-residue polypeptide: All-trans-retinol dehydrogenase [NAD(+)] ADH7 (386 aa).

Zn(2+) is bound at residue Cys59. 60–64 (RTDDH) lines the NAD(+) pocket. Zn(2+) is bound by residues His80, Cys110, Cys113, Cys116, Cys124, and Cys186. Residues 211-216 (GLGGVG), Asp235, Lys240, 281-283 (IGH), 304-306 (VGV), 329-331 (CVF), and Arg381 each bind NAD(+).

The protein belongs to the zinc-containing alcohol dehydrogenase family. Class-IV subfamily. As to quaternary structure, homodimer. Requires Zn(2+) as cofactor. In terms of tissue distribution, preferentially expressed in stomach.

The protein localises to the cytoplasm. The catalysed reaction is a primary alcohol + NAD(+) = an aldehyde + NADH + H(+). The enzyme catalyses 10-hydroxydecanoate + NAD(+) = 10-oxodecanoate + NADH + H(+). It catalyses the reaction all-trans-retinol + NAD(+) = all-trans-retinal + NADH + H(+). It carries out the reaction 9-cis-retinol + NAD(+) = 9-cis-retinal + NADH + H(+). The catalysed reaction is all-trans-3,4-didehydroretinol + NAD(+) = all-trans-3,4-didehydroretinal + NADH + H(+). The enzyme catalyses all-trans-4-hydroxyretinol + NAD(+) = all-trans-4-hydroxyretinal + NADH + H(+). It catalyses the reaction all-trans-4-oxoretinol + NAD(+) = all-trans-4-oxoretinal + NADH + H(+). It carries out the reaction 12-hydroxydodecanoate + NAD(+) = 12-oxododecanoate + NADH + H(+). The catalysed reaction is 16-hydroxyhexadecanoate + NAD(+) = 16-oxohexadecanoate + NADH + H(+). The enzyme catalyses hexan-1-ol + NAD(+) = hexanal + NADH + H(+). It catalyses the reaction (E)-hex-2-en-1-ol + NAD(+) = (E)-hex-2-enal + NADH + H(+). It carries out the reaction (E)-4-hydroxynon-2-en-1-ol + NAD(+) = (E)-4-hydroxynon-2-enal + NADH + H(+). With respect to regulation, retinol oxidation is inhibited by the detergent Tween 80. Ethanol inhibits both all-trans-retinol and 9-cis-retinol oxidation. 13-cis-retinol is an effective competitive inhibitor of the 9-cis-retinol oxidation. All-trans-retinoic acid is a powerful inhibitor of all-trans-retinol oxidation. 13-cis-retinoic acid is a powerful inhibitor of all-trans-retinol oxidation. Cimetidine competitively inhibited ethanol oxidation. In terms of biological role, catalyzes the NAD-dependent oxidation of all-trans-retinol, alcohol, and omega-hydroxy fatty acids and their derivatives. Oxidizes preferentially all trans-retinol, all-trans-4-hydroxyretinol, 9-cis-retinol, 2-hexenol, and long chain omega-hydroxy fatty acids such as juniperic acid. In vitro can also catalyze the NADH-dependent reduction of all-trans-retinal and aldehydes and their derivatives. Reduces preferentially all trans-retinal, all-trans-4-oxoretinal and hexanal. Catalyzes in the oxidative direction with higher efficiency. Therefore may participate in retinoid metabolism, fatty acid omega-oxidation, and elimination of cytotoxic aldehydes produced by lipid peroxidation. The protein is All-trans-retinol dehydrogenase [NAD(+)] ADH7 of Homo sapiens (Human).